The chain runs to 160 residues: uncharacterized protein (160 aa).

Positions 1–31 (METEKPNTDVKVAQDLEKLKLDEKHKDEKKD) are enriched in basic and acidic residues. The interval 1-160 (METEKPNTDV…DKKDKEHKKE (160 aa)) is disordered. The stretch at 20–111 (KLDEKHKDEK…KSKLEGKKDK (92 aa)) forms a coiled coil. Residues 32–42 (KKDKKDKKDKK) show a composition bias toward basic residues. Residues 43–160 (DKKEKTPEEI…DKKDKEHKKE (118 aa)) show a composition bias toward basic and acidic residues.

This is an uncharacterized protein from Dictyostelium discoideum (Social amoeba).